Consider the following 179-residue polypeptide: MAEPELEELAELVRRLSVVHGRVTLSSGKEADYYVDLRRATLHHRASALIGRLMRELTSDWDYAVVGGLTLGADPVATAIMHAPGRPIDAFVVRKSAKTHGLQRLIEGSEVAGKRVLVVEDTSTTGNSALTAVRAVQQAGGQVLGVATVVDRATGAAEAIEAEGLPYRSVLGLADLGLG.

5-phospho-alpha-D-ribose 1-diphosphate-binding positions include Arg94, Lys95, Lys98, His100, and 120 to 128 (EDTSTTGNS). Thr124 and Arg152 together coordinate orotate.

The protein belongs to the purine/pyrimidine phosphoribosyltransferase family. PyrE subfamily. Homodimer. Mg(2+) serves as cofactor.

It carries out the reaction orotidine 5'-phosphate + diphosphate = orotate + 5-phospho-alpha-D-ribose 1-diphosphate. Its pathway is pyrimidine metabolism; UMP biosynthesis via de novo pathway; UMP from orotate: step 1/2. Its function is as follows. Catalyzes the transfer of a ribosyl phosphate group from 5-phosphoribose 1-diphosphate to orotate, leading to the formation of orotidine monophosphate (OMP). This is Orotate phosphoribosyltransferase from Mycobacterium avium (strain 104).